The primary structure comprises 1399 residues: DNA-directed RNA polymerase subunit beta' (1399 aa).

4 residues coordinate Zn(2+): cysteine 70, cysteine 72, cysteine 85, and cysteine 88. Mg(2+) contacts are provided by aspartate 460, aspartate 462, and aspartate 464. Positions 814, 888, 895, and 898 each coordinate Zn(2+).

Belongs to the RNA polymerase beta' chain family. In terms of assembly, the RNAP catalytic core consists of 2 alpha, 1 beta, 1 beta' and 1 omega subunit. When a sigma factor is associated with the core the holoenzyme is formed, which can initiate transcription. Requires Mg(2+) as cofactor. The cofactor is Zn(2+).

The catalysed reaction is RNA(n) + a ribonucleoside 5'-triphosphate = RNA(n+1) + diphosphate. DNA-dependent RNA polymerase catalyzes the transcription of DNA into RNA using the four ribonucleoside triphosphates as substrates. This chain is DNA-directed RNA polymerase subunit beta', found in Stutzerimonas stutzeri (strain A1501) (Pseudomonas stutzeri).